The sequence spans 160 residues: Cytochrome b6-f complex subunit 4 (160 aa).

3 helical membrane passes run 36–56 (LLYV…ALAV), 95–115 (LLGV…PFIE), and 131–151 (TVFL…ALPL).

It belongs to the cytochrome b family. PetD subfamily. In terms of assembly, the 4 large subunits of the cytochrome b6-f complex are cytochrome b6, subunit IV (17 kDa polypeptide, PetD), cytochrome f and the Rieske protein, while the 4 small subunits are PetG, PetL, PetM and PetN. The complex functions as a dimer.

The protein resides in the cellular thylakoid membrane. Component of the cytochrome b6-f complex, which mediates electron transfer between photosystem II (PSII) and photosystem I (PSI), cyclic electron flow around PSI, and state transitions. The protein is Cytochrome b6-f complex subunit 4 of Trichormus variabilis (strain ATCC 29413 / PCC 7937) (Anabaena variabilis).